A 1755-amino-acid polypeptide reads, in one-letter code: BCL-6 corepressor (1755 aa).

The interval 309-345 (NSKQPRVPSAKAVTSGLPGDTALLLPPSPRPSPRVHL) is disordered. Residues Ser336, Ser340, Ser365, and Ser367 each carry the phosphoserine modification. The disordered stretch occupies residues 388–438 (LSNGKYPKAPEGGEGAQPVPGHARKTAVQDRKDGSSPPLLEKQTVTKDVTD). An N6-acetyllysine modification is found at Lys392. Ser423 carries the post-translational modification Phosphoserine. The segment at 498 to 514 (RSEIISTAPSSWVVPGP) is interaction with BCL6. Residues 557–578 (VSGSVSSAGRPASASPAPNANA) show a composition bias toward low complexity. Disordered regions lie at residues 557 to 641 (VSGS…IFLS), 737 to 760 (ITKEEKPERRSRSHERARYEDPTL), 773 to 794 (TKLHPDVPTDKNLKPNPNWNQG), and 815 to 844 (AKTDTNVSKPSFAAESVGQSAEPPKPSVEP). Positions 580–594 (GTKTSRSSVETTPSV) are enriched in polar residues. A compositionally biased stretch (low complexity) spans 605-620 (PAKHSSSTSSKGAKAS). The span at 775–785 (LHPDVPTDKNL) shows a compositional bias: basic and acidic residues. Residue Lys786 forms a Glycyl lysine isopeptide (Lys-Gly) (interchain with G-Cter in SUMO2) linkage. A Glycyl lysine isopeptide (Lys-Gly) (interchain with G-Cter in SUMO2) cross-link involves residue Lys872. Disordered stretches follow at residues 1071–1187 (IAEQ…EDPH) and 1220–1328 (QQVS…KENQ). A compositionally biased stretch (basic and acidic residues) spans 1076–1107 (ESERCEYSVGNKHRDPFEAPEDKDLPVEKYFV). Phosphoserine is present on residues Ser1127 and Ser1139. Over residues 1166–1175 (SKDDWPEREM) the composition is skewed to basic and acidic residues. Positions 1238 to 1252 (TQATQPEAIPQGTNI) are enriched in polar residues. Positions 1253 to 1279 (TEEKPGRKRAEAKGNRSWSEESLKPSD) are enriched in basic and acidic residues. Lys1256 participates in a covalent cross-link: Glycyl lysine isopeptide (Lys-Gly) (interchain with G-Cter in SUMO2). 3 positions are modified to phosphoserine: Ser1290, Ser1345, and Ser1410. A Glycyl lysine isopeptide (Lys-Gly) (interchain with G-Cter in SUMO2) cross-link involves residue Lys1413. Residues 1430 to 1447 (QSTQLPCSSSPQETTQSR) show a composition bias toward polar residues. The tract at residues 1430 to 1451 (QSTQLPCSSSPQETTQSRPMPP) is disordered. 3 ANK repeats span residues 1462-1495 (AGETLLQRAARLGYEEVVLYCLENKICDVNHRDN), 1496-1525 (AGYCALHEACARGWLNIVRHLLEYGADVNC), and 1529-1558 (DGTRPLHDAVENDHLEIVRLLLSYGADPTL). Residues 1634–1748 (SDVFEFEFSE…SSVEWLHPSD (115 aa)) form a necessary and sufficient for interaction with PCGF1 region.

Belongs to the BCOR family. As to quaternary structure, interacts with BCL6; the interaction is direct. Forms ternary complexes with BCL6 and SMRT/NCOR2 on selected target genes promoters; potently repress expression. Can interact with HDAC1, HDAC3 and HDAC5. Interacts with PCGF1; the interaction is direct. Interacts with KDM2B. Component of an approximately 800 kDa repressive BCOR complex at least composed of BCOR, RYBP, PCGF1, RING1, RNF2/RING2, KDM2B and SKP1. Interacts with CPNE4 (via VWFA domain). Isoform 1 may interact with MLLT3/AF9. In terms of tissue distribution, ubiquitously expressed.

The protein resides in the nucleus. In terms of biological role, transcriptional corepressor. May specifically inhibit gene expression when recruited to promoter regions by sequence-specific DNA-binding proteins such as BCL6 and MLLT3. This repression may be mediated at least in part by histone deacetylase activities which can associate with this corepressor. Involved in the repression of TFAP2A; impairs binding of BCL6 and KDM2B to TFAP2A promoter regions. Via repression of TFAP2A acts as a negative regulator of osteo-dentiogenic capacity in adult stem cells; the function implies inhibition of methylation on histone H3 'Lys-4' (H3K4me3) and 'Lys-36' (H3K36me2). The polypeptide is BCL-6 corepressor (BCOR) (Homo sapiens (Human)).